A 482-amino-acid chain; its full sequence is Probable cytosol aminopeptidase (482 aa).

Lys251 and Asp256 together coordinate Mn(2+). Lys263 is an active-site residue. Mn(2+) contacts are provided by Asp274, Asp333, and Glu335. Residue Arg337 is part of the active site.

The protein belongs to the peptidase M17 family. Requires Mn(2+) as cofactor.

The protein localises to the cytoplasm. The catalysed reaction is Release of an N-terminal amino acid, Xaa-|-Yaa-, in which Xaa is preferably Leu, but may be other amino acids including Pro although not Arg or Lys, and Yaa may be Pro. Amino acid amides and methyl esters are also readily hydrolyzed, but rates on arylamides are exceedingly low.. It catalyses the reaction Release of an N-terminal amino acid, preferentially leucine, but not glutamic or aspartic acids.. In terms of biological role, presumably involved in the processing and regular turnover of intracellular proteins. Catalyzes the removal of unsubstituted N-terminal amino acids from various peptides. The polypeptide is Probable cytosol aminopeptidase (Acinetobacter baylyi (strain ATCC 33305 / BD413 / ADP1)).